Here is a 261-residue protein sequence, read N- to C-terminus: Ribosomal RNA small subunit methyltransferase J (261 aa).

Residues arginine 109–aspartate 110, glutamate 125–arginine 126, and aspartate 179 contribute to the S-adenosyl-L-methionine site.

The protein belongs to the methyltransferase superfamily. RsmJ family.

The protein localises to the cytoplasm. It carries out the reaction guanosine(1516) in 16S rRNA + S-adenosyl-L-methionine = N(2)-methylguanosine(1516) in 16S rRNA + S-adenosyl-L-homocysteine + H(+). In terms of biological role, specifically methylates the guanosine in position 1516 of 16S rRNA. The protein is Ribosomal RNA small subunit methyltransferase J of Pseudomonas aeruginosa (strain ATCC 15692 / DSM 22644 / CIP 104116 / JCM 14847 / LMG 12228 / 1C / PRS 101 / PAO1).